Consider the following 232-residue polypeptide: Protein G1-like3 (232 aa).

Disordered regions lie at residues 20–77 (AGLL…YEAQ) and 189–232 (ARAR…GAAC). A compositionally biased stretch (gly residues) spans 38–53 (AGGGGGGGGDGAGGSS). The region spanning 73-200 (RYEAQKRRDW…ARGVSYEKKK (128 aa)) is the ALOG domain. The Nuclear localization signal motif lies at 198-202 (KKKRK). Residues 216–232 (PHPPPPPPPPPSAGAAC) show a composition bias toward pro residues.

Belongs to the plant homeotic and developmental regulators ALOG protein family.

The protein localises to the nucleus. Its function is as follows. Probable transcription regulator that acts as a developmental regulator by promoting cell growth in response to light. In Oryza sativa subsp. indica (Rice), this protein is Protein G1-like3.